Here is a 380-residue protein sequence, read N- to C-terminus: Queuine tRNA-ribosyltransferase (380 aa).

The active-site Proton acceptor is the Asp96. Substrate-binding positions include Asp96–Phe100, Asp150, Gln193, and Gly220. Positions Gly251 to Ser257 are RNA binding. Asp270 acts as the Nucleophile in catalysis. Residues Thr275–Arg279 form an RNA binding; important for wobble base 34 recognition region. 4 residues coordinate Zn(2+): Cys308, Cys310, Cys313, and His339.

Belongs to the queuine tRNA-ribosyltransferase family. In terms of assembly, homodimer. Within each dimer, one monomer is responsible for RNA recognition and catalysis, while the other monomer binds to the replacement base PreQ1. The cofactor is Zn(2+).

It carries out the reaction 7-aminomethyl-7-carbaguanine + guanosine(34) in tRNA = 7-aminomethyl-7-carbaguanosine(34) in tRNA + guanine. Its pathway is tRNA modification; tRNA-queuosine biosynthesis. Its function is as follows. Catalyzes the base-exchange of a guanine (G) residue with the queuine precursor 7-aminomethyl-7-deazaguanine (PreQ1) at position 34 (anticodon wobble position) in tRNAs with GU(N) anticodons (tRNA-Asp, -Asn, -His and -Tyr). Catalysis occurs through a double-displacement mechanism. The nucleophile active site attacks the C1' of nucleotide 34 to detach the guanine base from the RNA, forming a covalent enzyme-RNA intermediate. The proton acceptor active site deprotonates the incoming PreQ1, allowing a nucleophilic attack on the C1' of the ribose to form the product. After dissociation, two additional enzymatic reactions on the tRNA convert PreQ1 to queuine (Q), resulting in the hypermodified nucleoside queuosine (7-(((4,5-cis-dihydroxy-2-cyclopenten-1-yl)amino)methyl)-7-deazaguanosine). In Streptococcus pneumoniae (strain Hungary19A-6), this protein is Queuine tRNA-ribosyltransferase.